Here is a 379-residue protein sequence, read N- to C-terminus: Cobalt-precorrin-5B C(1)-methyltransferase (379 aa).

This sequence belongs to the CbiD family.

The catalysed reaction is Co-precorrin-5B + S-adenosyl-L-methionine = Co-precorrin-6A + S-adenosyl-L-homocysteine. Its pathway is cofactor biosynthesis; adenosylcobalamin biosynthesis; cob(II)yrinate a,c-diamide from sirohydrochlorin (anaerobic route): step 6/10. Its function is as follows. Catalyzes the methylation of C-1 in cobalt-precorrin-5B to form cobalt-precorrin-6A. The sequence is that of Cobalt-precorrin-5B C(1)-methyltransferase from Cyanothece sp. (strain PCC 7425 / ATCC 29141).